The following is a 431-amino-acid chain: Adenylosuccinate lyase (431 aa).

Residues 4-5 (RY), 67-69 (RHD), and 93-94 (TS) each bind N(6)-(1,2-dicarboxyethyl)-AMP. His141 serves as the catalytic Proton donor/acceptor. Gln212 is a N(6)-(1,2-dicarboxyethyl)-AMP binding site. Ser262 serves as the catalytic Proton donor/acceptor. N(6)-(1,2-dicarboxyethyl)-AMP is bound by residues Ser263, 268-270 (KRN), and 307-311 (SVERV).

It belongs to the lyase 1 family. Adenylosuccinate lyase subfamily. Homooligomer. Residues from neighboring subunits contribute catalytic and substrate-binding residues to each active site.

The enzyme catalyses N(6)-(1,2-dicarboxyethyl)-AMP = fumarate + AMP. It catalyses the reaction (2S)-2-[5-amino-1-(5-phospho-beta-D-ribosyl)imidazole-4-carboxamido]succinate = 5-amino-1-(5-phospho-beta-D-ribosyl)imidazole-4-carboxamide + fumarate. It participates in purine metabolism; AMP biosynthesis via de novo pathway; AMP from IMP: step 2/2. Its pathway is purine metabolism; IMP biosynthesis via de novo pathway; 5-amino-1-(5-phospho-D-ribosyl)imidazole-4-carboxamide from 5-amino-1-(5-phospho-D-ribosyl)imidazole-4-carboxylate: step 2/2. Catalyzes two reactions in de novo purine nucleotide biosynthesis. Catalyzes the breakdown of 5-aminoimidazole- (N-succinylocarboxamide) ribotide (SAICAR or 2-[5-amino-1-(5-phospho-beta-D-ribosyl)imidazole-4-carboxamido]succinate) to 5-aminoimidazole-4-carboxamide ribotide (AICAR or 5-amino-1-(5-phospho-beta-D-ribosyl)imidazole-4-carboxamide) and fumarate, and of adenylosuccinate (ADS or N(6)-(1,2-dicarboxyethyl)-AMP) to adenosine monophosphate (AMP) and fumarate. This is Adenylosuccinate lyase (purB) from Synechocystis sp. (strain ATCC 27184 / PCC 6803 / Kazusa).